The chain runs to 122 residues: Structural protein p14.5 (122 aa).

Disordered stretches follow at residues 1-27 (MADF…LEYD) and 73-122 (EDNN…HKSK). Ala-2 bears the N-acetylalanine; by host mark. Residues 105–122 (KPKKKKHLFPKLSSHKSK) show a composition bias toward basic residues.

The protein belongs to the asfivirus structural protein p14.5 family. Interacts with the major capsid protein. Interacts with host IRF3; this interaction interferes with the recruitment of IRF3 to TBK1. Acetylated.

Its subcellular location is the virion. Structural protein required for transport of intracellular particles from the assembly sites to the plasma membrane. Binds to both ssDNA and dsDNA. Suppressed the activation of the cGAS/STING pathway by interfering with the recruitment of IRF3 to TBK1, which in turn suppresses IRF3 phosphorylation, decreasing interferon production. This is Structural protein p14.5 from African swine fever virus (isolate Warthog/Namibia/Wart80/1980) (ASFV).